We begin with the raw amino-acid sequence, 153 residues long: Large ribosomal subunit protein bL27m (153 aa).

Residues 1–37 constitute a mitochondrion transit peptide; sequence MINQGLFIRVNNFQLLKASLAYKKASNILTFPPIRTS. Positions 34–57 are disordered; the sequence is IRTSTKHGGGSSKNTGDSAGRRLG.

Belongs to the bacterial ribosomal protein bL27 family. As to quaternary structure, component of the mitochondrial large ribosomal subunit (mt-LSU). Mature yeast 74S mitochondrial ribosomes consist of a small (37S) and a large (54S) subunit. The 37S small subunit contains a 15S ribosomal RNA (15S mt-rRNA) and at least 32 different proteins. The 54S large subunit contains a 21S rRNA (21S mt-rRNA) and at least 45 different proteins.

The protein resides in the mitochondrion. Component of the mitochondrial ribosome (mitoribosome), a dedicated translation machinery responsible for the synthesis of mitochondrial genome-encoded proteins, including at least some of the essential transmembrane subunits of the mitochondrial respiratory chain. The mitoribosomes are attached to the mitochondrial inner membrane and translation products are cotranslationally integrated into the membrane. This chain is Large ribosomal subunit protein bL27m (mrp7), found in Schizosaccharomyces pombe (strain 972 / ATCC 24843) (Fission yeast).